The chain runs to 541 residues: Phosphoenolpyruvate carboxykinase (ATP) (541 aa).

Substrate is bound by residues Arg-64, Tyr-206, and Lys-212. Residues Lys-212, His-231, and 247 to 255 (GLSGTGKTT) contribute to the ATP site. Mn(2+)-binding residues include Lys-212 and His-231. Asp-268 is a Mn(2+) binding site. The ATP site is built by Glu-296, Arg-332, and Thr-454. Arg-332 is a substrate binding site.

This sequence belongs to the phosphoenolpyruvate carboxykinase (ATP) family. As to quaternary structure, monomer. The cofactor is Mn(2+).

The protein resides in the cytoplasm. The enzyme catalyses oxaloacetate + ATP = phosphoenolpyruvate + ADP + CO2. It participates in carbohydrate biosynthesis; gluconeogenesis. In terms of biological role, involved in the gluconeogenesis. Catalyzes the conversion of oxaloacetate (OAA) to phosphoenolpyruvate (PEP) through direct phosphoryl transfer between the nucleoside triphosphate and OAA. This chain is Phosphoenolpyruvate carboxykinase (ATP), found in Wigglesworthia glossinidia brevipalpis.